Here is a 345-residue protein sequence, read N- to C-terminus: tRNA pseudouridine synthase B (345 aa).

Asp-39 (nucleophile) is an active-site residue.

Belongs to the pseudouridine synthase TruB family. Type 1 subfamily.

It carries out the reaction uridine(55) in tRNA = pseudouridine(55) in tRNA. Its function is as follows. Responsible for synthesis of pseudouridine from uracil-55 in the psi GC loop of transfer RNAs. This Rickettsia rickettsii (strain Iowa) protein is tRNA pseudouridine synthase B.